Reading from the N-terminus, the 722-residue chain is D-(-)-3-hydroxybutyrate oligomer hydrolase (722 aa).

Residues 1 to 25 (MKTMQGKGSGRRLRGALLVTMAASG) form the signal peptide. S319 (charge relay system) is an active-site residue.

It belongs to the D-(-)-3-hydroxybutyrate oligomer hydrolase family.

The protein resides in the secreted. It catalyses the reaction (3R)-hydroxybutanoate dimer + H2O = 2 (R)-3-hydroxybutanoate + H(+). It functions in the pathway lipid metabolism; butanoate metabolism. Inhibited by diisopropylfluorophosphate (DFP). Functionally, participates in the degradation of poly-3-hydroxybutyrate (PHB). It works downstream of poly(3-hydroxybutyrate) depolymerase, hydrolyzing D(-)-3-hydroxybutyrate oligomers of various length (3HB-oligomers) into 3HB-monomers. The polypeptide is D-(-)-3-hydroxybutyrate oligomer hydrolase (Ralstonia pickettii (Burkholderia pickettii)).